The sequence spans 300 residues: 33 kDa chaperonin (300 aa).

Disulfide bonds link C240–C242 and C273–C276.

The protein belongs to the HSP33 family. Under oxidizing conditions two disulfide bonds are formed involving the reactive cysteines. Under reducing conditions zinc is bound to the reactive cysteines and the protein is inactive.

The protein localises to the cytoplasm. Redox regulated molecular chaperone. Protects both thermally unfolding and oxidatively damaged proteins from irreversible aggregation. Plays an important role in the bacterial defense system toward oxidative stress. The chain is 33 kDa chaperonin from Cyanothece sp. (strain PCC 7425 / ATCC 29141).